A 466-amino-acid polypeptide reads, in one-letter code: 3-isopropylmalate dehydratase large subunit (466 aa).

Residues Cys-347, Cys-407, and Cys-410 each coordinate [4Fe-4S] cluster.

This sequence belongs to the aconitase/IPM isomerase family. LeuC type 1 subfamily. In terms of assembly, heterodimer of LeuC and LeuD. Requires [4Fe-4S] cluster as cofactor.

The enzyme catalyses (2R,3S)-3-isopropylmalate = (2S)-2-isopropylmalate. It participates in amino-acid biosynthesis; L-leucine biosynthesis; L-leucine from 3-methyl-2-oxobutanoate: step 2/4. Catalyzes the isomerization between 2-isopropylmalate and 3-isopropylmalate, via the formation of 2-isopropylmaleate. This Pectobacterium carotovorum subsp. carotovorum (strain PC1) protein is 3-isopropylmalate dehydratase large subunit.